A 475-amino-acid chain; its full sequence is Ribulose bisphosphate carboxylase large chain (475 aa).

Residues 1 to 2 (MS) constitute a propeptide that is removed on maturation. Pro-3 bears the N-acetylproline mark. N6,N6,N6-trimethyllysine is present on Lys-14. Asn-123 and Thr-173 together coordinate substrate. Lys-175 serves as the catalytic Proton acceptor. Lys-177 is a binding site for substrate. Residues Lys-201, Asp-203, and Glu-204 each coordinate Mg(2+). The residue at position 201 (Lys-201) is an N6-carboxylysine. Residue His-294 is the Proton acceptor of the active site. Substrate contacts are provided by Arg-295, His-327, and Ser-379.

It belongs to the RuBisCO large chain family. Type I subfamily. In terms of assembly, heterohexadecamer of 8 large chains and 8 small chains. It depends on Mg(2+) as a cofactor.

It localises to the plastid. It is found in the chloroplast. It carries out the reaction 2 (2R)-3-phosphoglycerate + 2 H(+) = D-ribulose 1,5-bisphosphate + CO2 + H2O. The enzyme catalyses D-ribulose 1,5-bisphosphate + O2 = 2-phosphoglycolate + (2R)-3-phosphoglycerate + 2 H(+). In terms of biological role, ruBisCO catalyzes two reactions: the carboxylation of D-ribulose 1,5-bisphosphate, the primary event in carbon dioxide fixation, as well as the oxidative fragmentation of the pentose substrate in the photorespiration process. Both reactions occur simultaneously and in competition at the same active site. The polypeptide is Ribulose bisphosphate carboxylase large chain (Chlorella vulgaris (Green alga)).